We begin with the raw amino-acid sequence, 307 residues long: Methionyl-tRNA formyltransferase (307 aa).

108-111 (SLLP) serves as a coordination point for (6S)-5,6,7,8-tetrahydrofolate.

This sequence belongs to the Fmt family.

The enzyme catalyses L-methionyl-tRNA(fMet) + (6R)-10-formyltetrahydrofolate = N-formyl-L-methionyl-tRNA(fMet) + (6S)-5,6,7,8-tetrahydrofolate + H(+). Its function is as follows. Attaches a formyl group to the free amino group of methionyl-tRNA(fMet). The formyl group appears to play a dual role in the initiator identity of N-formylmethionyl-tRNA by promoting its recognition by IF2 and preventing the misappropriation of this tRNA by the elongation apparatus. This chain is Methionyl-tRNA formyltransferase, found in Xanthomonas oryzae pv. oryzae (strain MAFF 311018).